An 88-amino-acid chain; its full sequence is Small ribosomal subunit protein uS15 (88 aa).

The protein belongs to the universal ribosomal protein uS15 family. As to quaternary structure, part of the 30S ribosomal subunit. Forms a bridge to the 50S subunit in the 70S ribosome, contacting the 23S rRNA.

One of the primary rRNA binding proteins, it binds directly to 16S rRNA where it helps nucleate assembly of the platform of the 30S subunit by binding and bridging several RNA helices of the 16S rRNA. Functionally, forms an intersubunit bridge (bridge B4) with the 23S rRNA of the 50S subunit in the ribosome. This is Small ribosomal subunit protein uS15 from Mesoplasma florum (strain ATCC 33453 / NBRC 100688 / NCTC 11704 / L1) (Acholeplasma florum).